A 241-amino-acid polypeptide reads, in one-letter code: DNA repair protein RecO (241 aa).

This sequence belongs to the RecO family.

Functionally, involved in DNA repair and RecF pathway recombination. The chain is DNA repair protein RecO from Rickettsia bellii (strain OSU 85-389).